Consider the following 229-residue polypeptide: MRLNIAIFFGALFGALGVLLFLVAFGSDYWLLATEVGRCSGEKNIENVTFHHEGFFWRCWFNGIVEENDSNIWKFWYTNQPPSKNCTHAYLSPYPFMRGEHNSTSYDSAVIYRGFWAVLMLLGVVAVVIASFLIICAAPFASHFLYKAGGGSYIAAGILFSLVVMLYVIWVQAVADMESYRNMKMKDCLDFTPSVLYGWSFFLAPAGIFFSLLAGLLFLVVGWHIQIHH.

Residues methionine 1–glycine 26 form the signal peptide. Residues serine 27–glycine 114 are Extracellular-facing. N-linked (GlcNAc...) asparagine glycosylation occurs at asparagine 47. The tract at residues threonine 49–cysteine 59 is interaction with ITGB1. Asparagine 102 carries N-linked (GlcNAc...) asparagine glycosylation. The helical transmembrane segment at phenylalanine 115–isoleucine 135 threads the bilayer. Over cysteine 136–tyrosine 153 the chain is Cytoplasmic. The helical transmembrane segment at isoleucine 154–valine 174 threads the bilayer. The Extracellular segment spans residues alanine 175–serine 200. Residues phenylalanine 201–valine 221 form a helical membrane-spanning segment. The Cytoplasmic portion of the chain corresponds to glycine 222–histidine 229.

This sequence belongs to the TMEM182 family. As to quaternary structure, interacts with ITGB1.

It localises to the cell membrane. In terms of biological role, negatively regulates myogenesis and skeletal muscle regeneration via its association with ITGB1. Modulates ITGB1 activation by decreasing ITGB1-LAMB1 interaction and inhibiting ITGB1-mediated intracellular signaling during myogenesis. The chain is Transmembrane protein 182 (TMEM182) from Homo sapiens (Human).